Here is a 1198-residue protein sequence, read N- to C-terminus: Chromosome partition protein Smc (1198 aa).

Position 40–47 (40–47 (PNGSGKSN)) interacts with ATP. Coiled coils occupy residues 175–211 (ITKYRMRKREALKRLDETEHNLERIRDILAEIEGQLG) and 322–524 (LGEQ…LAKK). Positions 534 to 647 (CGTLADLLQV…VTDMEAATRV (114 aa)) constitute an SMC hinge domain. Residues 687-1042 (SREIQELRQE…AELDKTMSER (356 aa)) are a coiled coil. A disordered region spans residues 785 to 818 (AEEQSKLTDSIQEAQEALARQEEKNRQASREMEQ). The span at 803 to 818 (ARQEEKNRQASREMEQ) shows a compositional bias: basic and acidic residues.

Belongs to the SMC family. As to quaternary structure, homodimer.

The protein localises to the cytoplasm. In terms of biological role, required for chromosome condensation and partitioning. The protein is Chromosome partition protein Smc of Desulfitobacterium hafniense (strain Y51).